A 25-amino-acid polypeptide reads, in one-letter code: Germin-like protein (25 aa).

Belongs to the germin family.

The protein is Germin-like protein of Populus euphratica (Euphrates poplar).